We begin with the raw amino-acid sequence, 253 residues long: Triosephosphate isomerase (253 aa).

Position 8–10 (8–10) interacts with substrate; that stretch reads NWK. The Electrophile role is filled by H93. E165 functions as the Proton acceptor in the catalytic mechanism. Residues G171, S210, and 231–232 contribute to the substrate site; that span reads GG.

Belongs to the triosephosphate isomerase family. As to quaternary structure, homodimer.

Its subcellular location is the cytoplasm. It carries out the reaction D-glyceraldehyde 3-phosphate = dihydroxyacetone phosphate. Its pathway is carbohydrate biosynthesis; gluconeogenesis. The protein operates within carbohydrate degradation; glycolysis; D-glyceraldehyde 3-phosphate from glycerone phosphate: step 1/1. Its function is as follows. Involved in the gluconeogenesis. Catalyzes stereospecifically the conversion of dihydroxyacetone phosphate (DHAP) to D-glyceraldehyde-3-phosphate (G3P). This chain is Triosephosphate isomerase, found in Francisella tularensis subsp. tularensis (strain FSC 198).